Here is a 443-residue protein sequence, read N- to C-terminus: Arginine biosynthesis bifunctional protein ArgJ, mitochondrial (443 aa).

6 residues coordinate substrate: Thr-179, Lys-206, Thr-217, Glu-303, Asn-438, and Ser-443. The active-site Nucleophile is the Thr-217.

The protein belongs to the ArgJ family. Heterodimer of an alpha and a beta chain. The alpha and beta chains are autoproteolytically processed from a single precursor protein within the mitochondrion.

It is found in the mitochondrion matrix. The enzyme catalyses N(2)-acetyl-L-ornithine + L-glutamate = N-acetyl-L-glutamate + L-ornithine. It catalyses the reaction L-glutamate + acetyl-CoA = N-acetyl-L-glutamate + CoA + H(+). Its pathway is amino-acid biosynthesis; L-arginine biosynthesis; L-ornithine and N-acetyl-L-glutamate from L-glutamate and N(2)-acetyl-L-ornithine (cyclic): step 1/1. The protein operates within amino-acid biosynthesis; L-arginine biosynthesis; N(2)-acetyl-L-ornithine from L-glutamate: step 1/4. Functionally, catalyzes two activities which are involved in the cyclic version of arginine biosynthesis: the synthesis of acetylglutamate from glutamate and acetyl-CoA, and of ornithine by transacetylation between acetylornithine and glutamate. This chain is Arginine biosynthesis bifunctional protein ArgJ, mitochondrial, found in Eremothecium gossypii (strain ATCC 10895 / CBS 109.51 / FGSC 9923 / NRRL Y-1056) (Yeast).